The chain runs to 361 residues: Cyclin-Y-like protein 2 (361 aa).

One can recognise a Cyclin N-terminal domain in the interval 204–286 (MRLTAEFAIV…QFLKLINYNN (83 aa)).

The protein belongs to the cyclin family. Cyclin Y subfamily.

The sequence is that of Cyclin-Y-like protein 2 (CCNYL2) from Homo sapiens (Human).